Reading from the N-terminus, the 320-residue chain is ATP-dependent 6-phosphofructokinase isozyme 1 (320 aa).

Position 12 (G12) interacts with ATP. ADP contacts are provided by residues 22–26 and 55–60; these read RGVVR and RYSVSD. ATP contacts are provided by residues 73 to 74 and 103 to 106; these read RF and GDGS. D104 is a binding site for Mg(2+). A substrate-binding site is contributed by 126-128; it reads TID. D128 (proton acceptor) is an active-site residue. R155 lines the ADP pocket. Residues R163 and 170–172 each bind substrate; that span reads MGR. Residues 186–188, K212, and 214–216 contribute to the ADP site; these read GCE and KKH. Substrate contacts are provided by residues E223, R244, and 250-253; that span reads HIQR.

Belongs to the phosphofructokinase type A (PFKA) family. ATP-dependent PFK group I subfamily. Prokaryotic clade 'B1' sub-subfamily. Homotetramer. Requires Mg(2+) as cofactor.

It localises to the cytoplasm. The catalysed reaction is beta-D-fructose 6-phosphate + ATP = beta-D-fructose 1,6-bisphosphate + ADP + H(+). The protein operates within carbohydrate degradation; glycolysis; D-glyceraldehyde 3-phosphate and glycerone phosphate from D-glucose: step 3/4. Allosterically activated by ADP and other diphosphonucleosides, and allosterically inhibited by phosphoenolpyruvate. Its function is as follows. Catalyzes the phosphorylation of D-fructose 6-phosphate to fructose 1,6-bisphosphate by ATP, the first committing step of glycolysis. This chain is ATP-dependent 6-phosphofructokinase isozyme 1, found in Shigella boydii serotype 18 (strain CDC 3083-94 / BS512).